A 187-amino-acid chain; its full sequence is Ribosome maturation factor RimP (187 aa).

The protein belongs to the RimP family.

The protein localises to the cytoplasm. Required for maturation of 30S ribosomal subunits. This is Ribosome maturation factor RimP from Phenylobacterium zucineum (strain HLK1).